Consider the following 953-residue polypeptide: UvrABC system protein A (953 aa).

33–40 (GLSGSGKS) provides a ligand contact to ATP. ABC transporter domains follow at residues 320 to 599 (WGST…EESI) and 619 to 949 (GHDN…RYLK). Residue 652–659 (GVSGSGKS) coordinates ATP. A C4-type zinc finger spans residues 752-778 (CEACQGDGLIKIEMHFLPDVYVKCDIC).

It belongs to the ABC transporter superfamily. UvrA family. As to quaternary structure, forms a heterotetramer with UvrB during the search for lesions.

The protein resides in the cytoplasm. In terms of biological role, the UvrABC repair system catalyzes the recognition and processing of DNA lesions. UvrA is an ATPase and a DNA-binding protein. A damage recognition complex composed of 2 UvrA and 2 UvrB subunits scans DNA for abnormalities. When the presence of a lesion has been verified by UvrB, the UvrA molecules dissociate. In Rickettsia bellii (strain RML369-C), this protein is UvrABC system protein A.